A 293-amino-acid polypeptide reads, in one-letter code: Homoserine kinase (293 aa).

Residue 83 to 93 (PITRGMGSSSA) participates in ATP binding.

It belongs to the GHMP kinase family. Homoserine kinase subfamily.

It localises to the cytoplasm. It carries out the reaction L-homoserine + ATP = O-phospho-L-homoserine + ADP + H(+). Its pathway is amino-acid biosynthesis; L-threonine biosynthesis; L-threonine from L-aspartate: step 4/5. In terms of biological role, catalyzes the ATP-dependent phosphorylation of L-homoserine to L-homoserine phosphate. This is Homoserine kinase from Helicobacter pylori (strain J99 / ATCC 700824) (Campylobacter pylori J99).